The chain runs to 253 residues: MNQPGETTHFGFRDVPLNDKQTMVNDVFHSVASRYDLMNDLMSGGMHRLWKDVMITTLNPPRDDAPFRLLDVAGGTGDISFRAAKASGAGFQATVCDINTDMLEVGRQRAVQRHLDGQVDFVEGNAEALQFPDRSYDAYTIAFGIRNVPRIDLALKEAYRVLKPGSRFLCLEFSSVDVPGLNKIYDLFSFKVIPEIGRVVTGDAESYQYLVESIRKFPKPYDFAEMMRDAGFARVNWQMMSGGIVALHSGWRL.

Residues Thr76, Asp97, and 125–126 (NA) each bind S-adenosyl-L-methionine.

It belongs to the class I-like SAM-binding methyltransferase superfamily. MenG/UbiE family.

It catalyses the reaction a 2-demethylmenaquinol + S-adenosyl-L-methionine = a menaquinol + S-adenosyl-L-homocysteine + H(+). The catalysed reaction is a 2-methoxy-6-(all-trans-polyprenyl)benzene-1,4-diol + S-adenosyl-L-methionine = a 5-methoxy-2-methyl-3-(all-trans-polyprenyl)benzene-1,4-diol + S-adenosyl-L-homocysteine + H(+). The protein operates within quinol/quinone metabolism; menaquinone biosynthesis; menaquinol from 1,4-dihydroxy-2-naphthoate: step 2/2. Its pathway is cofactor biosynthesis; ubiquinone biosynthesis. Functionally, methyltransferase required for the conversion of demethylmenaquinol (DMKH2) to menaquinol (MKH2) and the conversion of 2-polyprenyl-6-methoxy-1,4-benzoquinol (DDMQH2) to 2-polyprenyl-3-methyl-6-methoxy-1,4-benzoquinol (DMQH2). The sequence is that of Ubiquinone/menaquinone biosynthesis C-methyltransferase UbiE from Rhodopseudomonas palustris (strain BisB5).